The primary structure comprises 498 residues: MASQGTKRSYEQMETGGERQNATEIRSSVGRMVGGIGRFYIQMCTEFKLSDYEGRLIQNSITIERMVLSAFDERRNKYLEEHPSAGKDPKKTGGPIYRRRDGKWIRELILCDKEEIRRIWRQANNGEDATAGLTHLMIWHSNLNDATYQRTRALVRTGMDPRMCSLMQGSTLPRRSGAAGAAVKGVGTMVMELIRMIKRGINDRNFWRGENGRRTRIAYERMCNILKGKFQTAAQRAMMDQVRESRNPGNAEIEDLIFLARSALILRGSVAHKSCLPACVYGLAVASGYDFEKEGYSLVGIDPFRLLQNSQVFSLIRPNENSAHKSQLVWMACHSAAFEDLRVSSFIRGTKVVPRGKLSTRGVQIASNENMETMDSTTLELRSRYWAIRTRSGGNTNQQRASAGQISVQPTFSVQRNLPFERATIMAAFTGNTEGRTSDMRTEIIRMMESARPEDVSFQGRGVFELSDEKATNPIVPSFDMSNEGSYFFGDNAEEYDN.

A Unconventional nuclear localization signal motif is present at residues methionine 1 to glutamate 18. The segment at methionine 1 to alanine 22 is disordered. Positions lysine 198–arginine 216 match the Bipartite nuclear localization signal motif.

The protein belongs to the influenza viruses nucleoprotein family. Homomultimerizes to form the nucleocapsid. May bind host exportin-1/XPO1. Binds to viral genomic RNA. Protein-RNA contacts are mediated by a combination of electrostatic interactions between positively charged residues and the phosphate backbone and planar interactions between aromatic side chains and bases. Late in virus-infected cells, may be cleaved from a 56-kDa protein to a 53-kDa protein by a cellular caspase. This cleavage might be a marker for the onset of apoptosis in infected cells or have a specific function in virus host interaction.

It is found in the virion. The protein resides in the host nucleus. In terms of biological role, encapsidates the negative strand viral RNA, protecting it from nucleases. The encapsidated genomic RNA is termed the ribonucleoprotein (RNP) and serves as template for transcription and replication. The RNP needs to be localized in the host nucleus to start an infectious cycle, but is too large to diffuse through the nuclear pore complex. NP comprises at least 2 nuclear localization signals that are responsible for the active RNP import into the nucleus through cellular importin alpha/beta pathway. Later in the infection, nclear export of RNPs are mediated through viral proteins NEP interacting with M1 which binds nucleoproteins. It is possible that nucleoprotein binds directly host exportin-1/XPO1 and plays an active role in RNPs nuclear export. M1 interaction with RNP seems to hide nucleoprotein's nuclear localization signals. Soon after a virion infects a new cell, M1 dissociates from the RNP under acidification of the virion driven by M2 protein. Dissociation of M1 from RNP unmasks nucleoprotein's nuclear localization signals, targeting the RNP to the nucleus. The sequence is that of Nucleoprotein from Influenza A virus (strain A/Grey teal/Australia/2/1979 H4N4).